We begin with the raw amino-acid sequence, 148 residues long: Small ribosomal subunit protein uS7m (148 aa).

This sequence belongs to the universal ribosomal protein uS7 family. In terms of assembly, part of the small ribosomal subunit.

It is found in the mitochondrion. Functionally, one of the primary rRNA binding proteins, it binds directly to 18S rRNA where it nucleates assembly of the head domain of the small subunit. This Triticum aestivum (Wheat) protein is Small ribosomal subunit protein uS7m (RPS7).